Consider the following 173-residue polypeptide: Photosystem I assembly protein Ycf3 (173 aa).

TPR repeat units follow at residues Ala36–Glu69, Ser73–Leu106, and Gly121–Asn154.

Belongs to the Ycf3 family.

It localises to the cellular thylakoid membrane. Functionally, essential for the assembly of the photosystem I (PSI) complex. May act as a chaperone-like factor to guide the assembly of the PSI subunits. This is Photosystem I assembly protein Ycf3 from Synechococcus sp. (strain JA-2-3B'a(2-13)) (Cyanobacteria bacterium Yellowstone B-Prime).